Consider the following 459-residue polypeptide: Ribulose bisphosphate carboxylase large chain (459 aa).

Residue Lys4 is modified to N6,N6,N6-trimethyllysine. Substrate contacts are provided by Asn113 and Thr163. Residue Lys165 is the Proton acceptor of the active site. Lys167 provides a ligand contact to substrate. Residues Lys191, Asp193, and Glu194 each coordinate Mg(2+). Position 191 is an N6-carboxylysine (Lys191). His284 (proton acceptor) is an active-site residue. Substrate is bound by residues Arg285, His317, and Ser369.

Belongs to the RuBisCO large chain family. Type I subfamily. As to quaternary structure, heterohexadecamer of 8 large chains and 8 small chains; disulfide-linked. The disulfide link is formed within the large subunit homodimers. Mg(2+) serves as cofactor. Post-translationally, the disulfide bond which can form in the large chain dimeric partners within the hexadecamer appears to be associated with oxidative stress and protein turnover.

It localises to the plastid. The protein resides in the chloroplast. The catalysed reaction is 2 (2R)-3-phosphoglycerate + 2 H(+) = D-ribulose 1,5-bisphosphate + CO2 + H2O. The enzyme catalyses D-ribulose 1,5-bisphosphate + O2 = 2-phosphoglycolate + (2R)-3-phosphoglycerate + 2 H(+). Functionally, ruBisCO catalyzes two reactions: the carboxylation of D-ribulose 1,5-bisphosphate, the primary event in carbon dioxide fixation, as well as the oxidative fragmentation of the pentose substrate in the photorespiration process. Both reactions occur simultaneously and in competition at the same active site. This is Ribulose bisphosphate carboxylase large chain from Nypa fruticans (Nypa palm).